Here is a 330-residue protein sequence, read N- to C-terminus: tRNA-modifying protein YgfZ (330 aa).

The folate site is built by Trp-28 and Trp-190.

It belongs to the tRNA-modifying YgfZ family.

The protein localises to the cytoplasm. In terms of biological role, folate-binding protein involved in regulating the level of ATP-DnaA and in the modification of some tRNAs. It is probably a key factor in regulatory networks that act via tRNA modification, such as initiation of chromosomal replication. This chain is tRNA-modifying protein YgfZ, found in Serratia proteamaculans (strain 568).